The following is a 284-amino-acid chain: Orotidine 5'-phosphate decarboxylase (284 aa).

Residue Lys95 is the Proton donor of the active site.

Belongs to the OMP decarboxylase family. Type 2 subfamily.

It carries out the reaction orotidine 5'-phosphate + H(+) = UMP + CO2. It participates in pyrimidine metabolism; UMP biosynthesis via de novo pathway; UMP from orotate: step 2/2. The protein is Orotidine 5'-phosphate decarboxylase of Leptothrix cholodnii (strain ATCC 51168 / LMG 8142 / SP-6) (Leptothrix discophora (strain SP-6)).